Consider the following 242-residue polypeptide: Coat protein (242 aa).

The segment covering Met1–Asn16 has biased composition (pro residues). 2 disordered regions span residues Met1 to Gln41 and Ser219 to Ala242. Positions Ser219–Thr232 are enriched in polar residues.

The protein belongs to the potexvirus capsid protein family.

It is found in the virion. Required for genome encapsidation. Forms ribonucleoprotein complexes along with TGB1 helicase and viral RNA. In Strawberry mild yellow edge-associated virus (SMYEaV), this protein is Coat protein.